The following is a 1191-amino-acid chain: WASH complex subunit homolog 5 (1191 aa).

The protein belongs to the strumpellin family. As to quaternary structure, component of the WASH complex.

It localises to the early endosome. Acts at least in part as component of the WASH complex which may regulate wash nucleation-promoting factor (NPF) activity and is required for its membrane targeting during endosomal sorting. During embryogenesis, not involved in the wash-dependent developmental migration of hemocytes anteriorly from the tail. The protein is WASH complex subunit homolog 5 of Drosophila melanogaster (Fruit fly).